A 216-amino-acid polypeptide reads, in one-letter code: MIIAIDGPAASGKGTLARRLAAHFGLPHLDTGLLYRATARALLDHGHDLSDREAAISAARSLALTDFDEAGLRSRDMAEAASVVAAIPEVRAALVDMQRRFAGRPGGALLDGRDIGTVICPDADCKIFVTASDEARATRRALELRGRGEKVDYAAVLEDIRKRDLRDSSRAAAPLKPADDAVVLDTTKLDVEAAFKAALVIVESAHDSLRAGHPAF.

An ATP-binding site is contributed by 7–15 (GPAASGKGT).

It belongs to the cytidylate kinase family. Type 1 subfamily.

It localises to the cytoplasm. The enzyme catalyses CMP + ATP = CDP + ADP. It catalyses the reaction dCMP + ATP = dCDP + ADP. This chain is Cytidylate kinase, found in Methylocella silvestris (strain DSM 15510 / CIP 108128 / LMG 27833 / NCIMB 13906 / BL2).